The following is a 304-amino-acid chain: N-acetylmuramic acid 6-phosphate etherase (304 aa).

Positions 57–220 (AVKGLSAGGR…STATMVGLGK (164 aa)) constitute an SIS domain. Glu85 functions as the Proton donor in the catalytic mechanism. The active site involves Glu116.

The protein belongs to the GCKR-like family. MurNAc-6-P etherase subfamily. As to quaternary structure, homodimer.

It catalyses the reaction N-acetyl-D-muramate 6-phosphate + H2O = N-acetyl-D-glucosamine 6-phosphate + (R)-lactate. It participates in amino-sugar metabolism; N-acetylmuramate degradation. Its function is as follows. Specifically catalyzes the cleavage of the D-lactyl ether substituent of MurNAc 6-phosphate, producing GlcNAc 6-phosphate and D-lactate. The protein is N-acetylmuramic acid 6-phosphate etherase of Cutibacterium acnes (strain DSM 16379 / KPA171202) (Propionibacterium acnes).